The chain runs to 344 residues: GTP 3',8-cyclase (344 aa).

The 221-residue stretch at 19–239 (PFGRTIDYLR…ANYTLTDLPD (221 aa)) folds into the Radical SAM core domain. Arginine 28 lines the GTP pocket. 2 residues coordinate [4Fe-4S] cluster: cysteine 35 and cysteine 39. Tyrosine 41 contacts S-adenosyl-L-methionine. Position 42 (cysteine 42) interacts with [4Fe-4S] cluster. Arginine 77 contacts GTP. Glycine 81 provides a ligand contact to S-adenosyl-L-methionine. Threonine 111 is a binding site for GTP. Serine 135 provides a ligand contact to S-adenosyl-L-methionine. Lysine 171 provides a ligand contact to GTP. An S-adenosyl-L-methionine-binding site is contributed by methionine 205. The [4Fe-4S] cluster site is built by cysteine 268 and cysteine 271. 273–275 (RVR) serves as a coordination point for GTP. Cysteine 285 contributes to the [4Fe-4S] cluster binding site.

Belongs to the radical SAM superfamily. MoaA family. As to quaternary structure, monomer and homodimer. It depends on [4Fe-4S] cluster as a cofactor.

The catalysed reaction is GTP + AH2 + S-adenosyl-L-methionine = (8S)-3',8-cyclo-7,8-dihydroguanosine 5'-triphosphate + 5'-deoxyadenosine + L-methionine + A + H(+). It functions in the pathway cofactor biosynthesis; molybdopterin biosynthesis. In terms of biological role, catalyzes the cyclization of GTP to (8S)-3',8-cyclo-7,8-dihydroguanosine 5'-triphosphate. This Rhodopseudomonas palustris (strain ATCC BAA-98 / CGA009) protein is GTP 3',8-cyclase.